A 378-amino-acid polypeptide reads, in one-letter code: Carbamoyl phosphate synthase small chain (378 aa).

Residues 1 to 188 (MSILKEAYLY…THFAYGTSPN (188 aa)) are CPSase. L-glutamine is bound by residues S49, G244, and G246. The region spanning 192–378 (KVVAIDFGAK…FEEFAKLCCK (187 aa)) is the Glutamine amidotransferase type-1 domain. Catalysis depends on C272, which acts as the Nucleophile. 4 residues coordinate L-glutamine: L273, Q276, N314, and Y317. Active-site residues include H355 and E357.

This sequence belongs to the CarA family. As to quaternary structure, composed of two chains; the small (or glutamine) chain promotes the hydrolysis of glutamine to ammonia, which is used by the large (or ammonia) chain to synthesize carbamoyl phosphate. Tetramer of heterodimers (alpha,beta)4.

The catalysed reaction is hydrogencarbonate + L-glutamine + 2 ATP + H2O = carbamoyl phosphate + L-glutamate + 2 ADP + phosphate + 2 H(+). The enzyme catalyses L-glutamine + H2O = L-glutamate + NH4(+). It participates in amino-acid biosynthesis; L-arginine biosynthesis; carbamoyl phosphate from bicarbonate: step 1/1. It functions in the pathway pyrimidine metabolism; UMP biosynthesis via de novo pathway; (S)-dihydroorotate from bicarbonate: step 1/3. Small subunit of the glutamine-dependent carbamoyl phosphate synthetase (CPSase). CPSase catalyzes the formation of carbamoyl phosphate from the ammonia moiety of glutamine, carbonate, and phosphate donated by ATP, constituting the first step of 2 biosynthetic pathways, one leading to arginine and/or urea and the other to pyrimidine nucleotides. The small subunit (glutamine amidotransferase) binds and cleaves glutamine to supply the large subunit with the substrate ammonia. The sequence is that of Carbamoyl phosphate synthase small chain from Helicobacter hepaticus (strain ATCC 51449 / 3B1).